Reading from the N-terminus, the 424-residue chain is CinA-like protein (424 aa).

It belongs to the CinA family.

This Shewanella loihica (strain ATCC BAA-1088 / PV-4) protein is CinA-like protein.